The sequence spans 443 residues: Tol-Pal system protein TolB (443 aa).

An N-terminal signal peptide occupies residues 1 to 33 (MKIGIINTKIRTVFSAFACMIAASLVCTMPARA).

It belongs to the TolB family. The Tol-Pal system is composed of five core proteins: the inner membrane proteins TolA, TolQ and TolR, the periplasmic protein TolB and the outer membrane protein Pal. They form a network linking the inner and outer membranes and the peptidoglycan layer.

The protein localises to the periplasm. In terms of biological role, part of the Tol-Pal system, which plays a role in outer membrane invagination during cell division and is important for maintaining outer membrane integrity. This is Tol-Pal system protein TolB from Brucella anthropi (strain ATCC 49188 / DSM 6882 / CCUG 24695 / JCM 21032 / LMG 3331 / NBRC 15819 / NCTC 12168 / Alc 37) (Ochrobactrum anthropi).